Reading from the N-terminus, the 425-residue chain is MAADKPHMNLAVIGHIDHGKSTTVGRMMFETGAVPAHIIEAYRKEAESKGKATFEFAWVMDNLKEERERGITIDIAHKRFDTPKYYFTVVDCPGHRDFVKNMITGASQADAAILVVAAPDGVMEQTKEHVFLARTLGITQIIIAINKMDAVKFDEKRFNEVKKELSDLIKMVGYKPEETLFIPISSLQGINIKANSPETPWYKGPALIPALDTFKEPSKPTDKPLRLPIQDSYSISGIGTVPVGRVETGIMKKGMKVSFMPANKDGEIKSIEMHHEEIPQAVPGDNVGFNVRGIAKGDIRRGDVCGPAEQPPTVADEFTAQVVVLQHPSAITVGYTPVFHCHTTQTACTFIELKKKLDPRSGQTKEENPTFLKTGDAAIVQIKPTKPMVIENVKELPQLGRFAVRDMGSTIAAGMCIAIQPKQMR.

In terms of domain architecture, tr-type G spans 5-221 (KPHMNLAVIG…DTFKEPSKPT (217 aa)). The G1 stretch occupies residues 14–21 (GHIDHGKS). Residue 14–21 (GHIDHGKS) participates in GTP binding. Ser-21 provides a ligand contact to Mg(2+). The G2 stretch occupies residues 70–74 (GITID). Residues 91–94 (DCPG) are G3. Residues 91–95 (DCPGH) and 146–149 (NKMD) contribute to the GTP site. The segment at 146–149 (NKMD) is G4. Residues 185-187 (SSL) form a G5 region.

It belongs to the TRAFAC class translation factor GTPase superfamily. Classic translation factor GTPase family. EF-Tu/EF-1A subfamily.

Its subcellular location is the cytoplasm. It carries out the reaction GTP + H2O = GDP + phosphate + H(+). GTP hydrolase that promotes the GTP-dependent binding of aminoacyl-tRNA to the A-site of ribosomes during protein biosynthesis. The chain is Elongation factor 1-alpha from Methanoregula boonei (strain DSM 21154 / JCM 14090 / 6A8).